A 408-amino-acid polypeptide reads, in one-letter code: Succinylornithine transaminase (408 aa).

N6-(pyridoxal phosphate)lysine is present on lysine 252.

This sequence belongs to the class-III pyridoxal-phosphate-dependent aminotransferase family. AstC subfamily. It depends on pyridoxal 5'-phosphate as a cofactor.

The enzyme catalyses N(2)-succinyl-L-ornithine + 2-oxoglutarate = N-succinyl-L-glutamate 5-semialdehyde + L-glutamate. It functions in the pathway amino-acid degradation; L-arginine degradation via AST pathway; L-glutamate and succinate from L-arginine: step 3/5. Its function is as follows. Catalyzes the transamination of N(2)-succinylornithine and alpha-ketoglutarate into N(2)-succinylglutamate semialdehyde and glutamate. Can also act as an acetylornithine aminotransferase. The polypeptide is Succinylornithine transaminase (Salmonella heidelberg (strain SL476)).